Consider the following 359-residue polypeptide: UPF0283 membrane protein Rleg2_1967 (359 aa).

Positions 1-43 are disordered; sequence MSKPPSDPPRRPPAAFTYEDEATERHDNGRQAERRRKPESFSE. A compositionally biased stretch (basic and acidic residues) spans 23–40; sequence TERHDNGRQAERRRKPES. A run of 2 helical transmembrane segments spans residues 77–97 and 111–131; these read FGKI…GLWT and LGYL…ALVI.

This sequence belongs to the UPF0283 family.

The protein resides in the cell inner membrane. The sequence is that of UPF0283 membrane protein Rleg2_1967 from Rhizobium leguminosarum bv. trifolii (strain WSM2304).